We begin with the raw amino-acid sequence, 453 residues long: Serine/threonine-protein kinase VRK3 (453 aa).

A disordered region spans residues 30–123 (EDGGTQSAVT…QSPQTLKRTR (94 aa)). The span at 33–46 (GTQSAVTPHVSSVP) shows a compositional bias: polar residues. The short motif at 49 to 64 (RRDLNSSFETSPKKVK) is the Nuclear localization signal element. 6 positions are modified to phosphoserine: S54, S55, S59, S82, S83, and S108. Residues 81 to 101 (DSSGSDNTLTSPDRATGTRSR) show a composition bias toward polar residues. A compositionally biased stretch (polar residues) spans 109 to 123 (PLSNRQSPQTLKRTR). The Protein kinase domain occupies 125–436 (TTSLQALATG…TLRNSLEALL (312 aa)).

It belongs to the protein kinase superfamily. CK1 Ser/Thr protein kinase family. VRK subfamily. In terms of assembly, interacts with DUSP3. Interacts with RAN. Interacts with HSP70/HSPA1A. Phosphorylated at Ser-108 by CDK5; leading to protection of the cell against H2O2-induced apoptosis. In terms of processing, ubiquitinated by RNF144A. As to expression, expressed in liver, kidney, muscle, thymus, and bone marrow. Weakly expressed in spleen.

The protein resides in the nucleus. Its subcellular location is the cytoplasm. The catalysed reaction is L-seryl-[protein] + ATP = O-phospho-L-seryl-[protein] + ADP + H(+). In terms of biological role, plays a role in the regulation of the cell cycle by phosphorylating the nuclear envelope protein barrier-to-autointegration factor/BAF that is required for disassembly and reassembly, respectively, of the nuclear envelope during mitosis. Under normal physiological conditions, negatively regulates ERK activity along with VHR phosphatase in the nucleus, causing timely and transient action of ERK. Stress conditions activate CDK5 which phosphorylates VRK3 to increase VHR phosphatase activity and suppress prolonged ERK activation that causes cell death. For example, upon glutamate induction, promotes nuclear localization of HSP70/HSPA1A to inhibit ERK activation via VHR phosphatase. The sequence is that of Serine/threonine-protein kinase VRK3 (Vrk3) from Mus musculus (Mouse).